The following is a 613-amino-acid chain: Dihydroxy-acid dehydratase (613 aa).

Asp81 is a binding site for Mg(2+). A [2Fe-2S] cluster-binding site is contributed by Cys122. Positions 123 and 124 each coordinate Mg(2+). Lys124 is subject to N6-carboxylysine. [2Fe-2S] cluster is bound at residue Cys193. A Mg(2+)-binding site is contributed by Glu489. Ser515 functions as the Proton acceptor in the catalytic mechanism.

It belongs to the IlvD/Edd family. Homodimer. [2Fe-2S] cluster serves as cofactor. Requires Mg(2+) as cofactor.

The catalysed reaction is (2R)-2,3-dihydroxy-3-methylbutanoate = 3-methyl-2-oxobutanoate + H2O. It carries out the reaction (2R,3R)-2,3-dihydroxy-3-methylpentanoate = (S)-3-methyl-2-oxopentanoate + H2O. It functions in the pathway amino-acid biosynthesis; L-isoleucine biosynthesis; L-isoleucine from 2-oxobutanoate: step 3/4. It participates in amino-acid biosynthesis; L-valine biosynthesis; L-valine from pyruvate: step 3/4. Functions in the biosynthesis of branched-chain amino acids. Catalyzes the dehydration of (2R,3R)-2,3-dihydroxy-3-methylpentanoate (2,3-dihydroxy-3-methylvalerate) into 2-oxo-3-methylpentanoate (2-oxo-3-methylvalerate) and of (2R)-2,3-dihydroxy-3-methylbutanoate (2,3-dihydroxyisovalerate) into 2-oxo-3-methylbutanoate (2-oxoisovalerate), the penultimate precursor to L-isoleucine and L-valine, respectively. This is Dihydroxy-acid dehydratase from Pseudomonas fluorescens (strain ATCC BAA-477 / NRRL B-23932 / Pf-5).